A 307-amino-acid polypeptide reads, in one-letter code: OTU domain-containing protein 2 (307 aa).

Disordered stretches follow at residues 23-46 (ENKD…RKEV) and 96-130 (SRDE…AKRD). Positions 103–114 (QNVPVQQQQQGQ) are enriched in low complexity. An OTU domain is found at 167 to 307 (LKQFDIQPDG…GEHYNSLHDS (141 aa)).

This is OTU domain-containing protein 2 (OTU2) from Saccharomyces cerevisiae (strain ATCC 204508 / S288c) (Baker's yeast).